The chain runs to 190 residues: MIRFEIHGDNLTITDAIRNYIEEKIGKLERYFNDVPNAVAHVKVKTYSNSATKIEVTIPLKNVTLRAEERNDDLYAGIDLINNKLERQVRKYKTRINRKSRDRGDQEVFVAELQEMQETQVDNDAYDDNEIEIIRSKEFSLKPMDSEEAVLQMNLLGHDFFVFIDRETDGTSIVYRRKDGKYGLIQTSEQ.

This sequence belongs to the HPF/YfiA ribosome-associated protein family. Long HPF subfamily. In terms of assembly, interacts with 100S ribosomes.

The protein resides in the cytoplasm. Required for dimerization of active 70S ribosomes into 100S ribosomes in stationary phase; 100S ribosomes are translationally inactive and sometimes present during exponential growth. The chain is Ribosome hibernation promotion factor from Staphylococcus aureus (strain COL).